A 955-amino-acid chain; its full sequence is RNA polymerase-associated protein RapA (955 aa).

The Helicase ATP-binding domain maps to 163–333 (EVGHRYAPRV…FARLRLLDPE (171 aa)). Position 176 to 183 (176 to 183 (DEVGLGKT)) interacts with ATP. The short motif at 279–282 (DEAH) is the DEAH box element. In terms of domain architecture, Helicase C-terminal spans 478-642 (RVDWLLELLL…AVRDELFELL (165 aa)).

This sequence belongs to the SNF2/RAD54 helicase family. RapA subfamily. Interacts with the RNAP. Has a higher affinity for the core RNAP than for the holoenzyme. Its ATPase activity is stimulated by binding to RNAP.

Its function is as follows. Transcription regulator that activates transcription by stimulating RNA polymerase (RNAP) recycling in case of stress conditions such as supercoiled DNA or high salt concentrations. Probably acts by releasing the RNAP, when it is trapped or immobilized on tightly supercoiled DNA. Does not activate transcription on linear DNA. Probably not involved in DNA repair. The chain is RNA polymerase-associated protein RapA from Aeromonas salmonicida (strain A449).